The chain runs to 124 residues: Glycine cleavage system H protein (124 aa).

Residues 19-101 (TGTVGITDYA…AGKGWFLQIK (83 aa)) form the Lipoyl-binding domain. Residue Lys-60 is modified to N6-lipoyllysine.

Belongs to the GcvH family. In terms of assembly, the glycine cleavage system is composed of four proteins: P, T, L and H. The cofactor is (R)-lipoate.

Functionally, the glycine cleavage system catalyzes the degradation of glycine. The H protein shuttles the methylamine group of glycine from the P protein to the T protein. This is Glycine cleavage system H protein from Beijerinckia indica subsp. indica (strain ATCC 9039 / DSM 1715 / NCIMB 8712).